We begin with the raw amino-acid sequence, 187 residues long: Calmodulin-like protein 30 (187 aa).

Positions 21-47 (KPSRMFSRDRQSSGLSSPGPGGFSQPS) are disordered. The span at 32-47 (SSGLSSPGPGGFSQPS) shows a compositional bias: low complexity. EF-hand domains follow at residues 46 to 81 (PSVN…LGQE), 82 to 117 (RAIE…SGGI), 129 to 152 (FDLN…LGER), and 153 to 187 (CSLE…SNNV). 18 residues coordinate Ca(2+): D59, D61, D63, K65, E70, D95, D97, D99, E106, D130, N132, D134, K136, E141, D166, D168, D170, and E177.

It belongs to the calmodulin family.

In terms of biological role, potential calcium sensor. The protein is Calmodulin-like protein 30 of Arabidopsis thaliana (Mouse-ear cress).